A 301-amino-acid polypeptide reads, in one-letter code: F-box protein At4g02733 (301 aa).

An F-box domain is found at 91-146 (NSISWFLPSELTVKVFSMVDTKSLMQASACCTMFNNCAMDPLCYFHIDLTKAFKHV).

This chain is F-box protein At4g02733, found in Arabidopsis thaliana (Mouse-ear cress).